A 192-amino-acid chain; its full sequence is Thymidylate kinase (192 aa).

7 to 14 is an ATP binding site; that stretch reads GIDCVGKS.

The protein belongs to the thymidylate kinase family.

It catalyses the reaction dTMP + ATP = dTDP + ADP. Functionally, phosphorylation of dTMP to form dTDP in both de novo and salvage pathways of dTTP synthesis. In Campylobacter jejuni subsp. jejuni serotype O:6 (strain 81116 / NCTC 11828), this protein is Thymidylate kinase.